Consider the following 201-residue polypeptide: Ribonuclease HII (201 aa).

An RNase H type-2 domain is found at 12–201 (GIVCGIDEVG…FAPVAQYMLF (190 aa)). 3 residues coordinate a divalent metal cation: aspartate 18, glutamate 19, and aspartate 113.

This sequence belongs to the RNase HII family. Mn(2+) serves as cofactor. It depends on Mg(2+) as a cofactor.

The protein resides in the cytoplasm. The catalysed reaction is Endonucleolytic cleavage to 5'-phosphomonoester.. Endonuclease that specifically degrades the RNA of RNA-DNA hybrids. The polypeptide is Ribonuclease HII (rnhB) (Paramagnetospirillum magneticum (strain ATCC 700264 / AMB-1) (Magnetospirillum magneticum)).